Reading from the N-terminus, the 684-residue chain is Ubinuclein-1 (684 aa).

Disordered stretches follow at residues 108 to 137, 157 to 287, 311 to 332, 609 to 631, and 660 to 684; these read YKGNDSSDGEELDGAPDDDEYDTEDSFIDD, YVNR…LGKS, NVTGSRQSSQASKKDGSNVKSK, MVDRSNQQQPEKLKGISSSCNPT, and PQTRVIPAPQNLNIPRTTPDLNLPS. Acidic residues predominate over residues 114–137; the sequence is SDGEELDGAPDDDEYDTEDSFIDD. 2 stretches are compositionally biased toward basic and acidic residues: residues 157 to 167 and 184 to 199; these read YVNRGKLERME and SAKPCRDAVDVSDKHT. The span at 211 to 235 shows a compositional bias: polar residues; the sequence is STAPGSWKTQESPLPSGAQDANTSV. Residues 238-260 show a composition bias toward basic and acidic residues; that stretch reads DDVKHSDRANHQSRNDTSHKSRE. 4 stretches are compositionally biased toward polar residues: residues 261–284, 311–321, 611–631, and 669–684; these read TGSSSALHQKYSNKSLHQQSTSLL, NVTGSRQSSQA, DRSNQQQPEKLKGISSSCNPT, and QNLNIPRTTPDLNLPS.

It belongs to the ubinuclein family. Component of the HIRA complex made of UBN1, UBN2, ASF1A, CABIN1 and HIRA. Interacts with HIRA.

It localises to the nucleus. The protein localises to the nucleolus. May be required for replication-independent chromatin assembly. In Arabidopsis thaliana (Mouse-ear cress), this protein is Ubinuclein-1.